The chain runs to 148 residues: 3-dehydroquinate dehydratase (148 aa).

Tyr23 acts as the Proton acceptor in catalysis. Substrate-binding residues include Asn75, His81, and Asp88. His101 (proton donor) is an active-site residue. Substrate-binding positions include 102 to 103 (LS) and Arg112.

This sequence belongs to the type-II 3-dehydroquinase family. As to quaternary structure, homododecamer.

The enzyme catalyses 3-dehydroquinate = 3-dehydroshikimate + H2O. The protein operates within metabolic intermediate biosynthesis; chorismate biosynthesis; chorismate from D-erythrose 4-phosphate and phosphoenolpyruvate: step 3/7. Catalyzes a trans-dehydration via an enolate intermediate. This chain is 3-dehydroquinate dehydratase, found in Ectopseudomonas mendocina (strain ymp) (Pseudomonas mendocina).